A 460-amino-acid polypeptide reads, in one-letter code: Elongation factor 1-alpha (460 aa).

N,N,N-trimethylglycine is present on glycine 2. Position 3 is an N6,N6-dimethyllysine; alternate (lysine 3). Position 3 is an N6-methyllysine; alternate (lysine 3). The region spanning 6–241 is the tr-type G domain; sequence KQHINIVVIG…DAIEPPVRPT (236 aa). Residues 15 to 22 form a G1 region; sequence GHVDSGKS. 15–22 serves as a coordination point for GTP; the sequence is GHVDSGKS. Lysine 31 is subject to N6-methyllysine. The segment at 71–75 is G2; that stretch reads GITID. N6,N6,N6-trimethyllysine is present on lysine 80. The tract at residues 92 to 95 is G3; sequence DAPG. GTP is bound by residues 92 to 96 and 154 to 157; these read DAPGH and NKMD. The interval 154–157 is G4; the sequence is NKMD. A G5 region spans residues 193-195; it reads SGF. Residue lysine 317 is modified to N6,N6-dimethyllysine; alternate. At lysine 317 the chain carries N6-methyllysine; alternate. An N6-methyllysine modification is found at lysine 391.

This sequence belongs to the TRAFAC class translation factor GTPase superfamily. Classic translation factor GTPase family. EF-Tu/EF-1A subfamily.

The protein resides in the cytoplasm. This protein promotes the GTP-dependent binding of aminoacyl-tRNA to the A-site of ribosomes during protein biosynthesis. This is Elongation factor 1-alpha (tef1) from Aspergillus oryzae (strain ATCC 42149 / RIB 40) (Yellow koji mold).